A 956-amino-acid polypeptide reads, in one-letter code: MAM domain-containing glycosylphosphatidylinositol anchor protein 2 (956 aa).

An N-terminal signal peptide occupies residues 1–25 (MDLLYGLVWLLTVLLEGISGQGVYA). Ig-like domains are found at residues 27 to 127 (PTVR…IRVD) and 134 to 232 (PVVT…KMVS). 2 disulfides stabilise this stretch: cysteine 62-cysteine 110 and cysteine 159-cysteine 216. N-linked (GlcNAc...) asparagine glycans are attached at residues asparagine 92, asparagine 213, and asparagine 237. 4 Ig-like domains span residues 242–328 (PSIK…NIIV), 340–436 (PDPY…VNIS), 442–533 (PNLT…ALVQ), and 540–627 (PAVE…FLVT). Intrachain disulfides connect cysteine 264–cysteine 310 and cysteine 359–cysteine 417. Residues asparagine 434, asparagine 443, asparagine 504, asparagine 610, and asparagine 703 are each glycosylated (N-linked (GlcNAc...) asparagine). 2 cysteine pairs are disulfide-bonded: cysteine 465–cysteine 515 and cysteine 561–cysteine 611. The Fibronectin type-III domain occupies 638–739 (DTYNPVWQNR…IRVIKYSAPV (102 aa)). An MAM domain is found at 746–921 (FHCGFEDGNI…VSIAEGECAK (176 aa)). Aspartate 931 is lipidated: GPI-anchor amidated aspartate. The propeptide at 932 to 956 (GAVGILVHIWLFPIIVLISILSPRR) is removed in mature form.

Interacts (through the Ig-like domains) with NLGN2. As to expression, detected in Leydig cells, syncytiotrophoblast, duodenal villi epithelial cells and neutrophils from kidney and cutaneous squamous cell carcinoma (at protein level).

The protein localises to the cell membrane. May be involved in cell-cell interactions. This chain is MAM domain-containing glycosylphosphatidylinositol anchor protein 2 (MDGA2), found in Homo sapiens (Human).